The following is a 114-amino-acid chain: Cytochrome b-c1 complex subunit 1, mitochondrial (114 aa).

Position 31 is an N6-acetyllysine (K31).

The protein belongs to the peptidase M16 family. UQCRC1/QCR1 subfamily. In terms of assembly, component of the ubiquinol-cytochrome c oxidoreductase (cytochrome b-c1 complex, complex III, CIII), a multisubunit enzyme composed of 11 subunits. The complex is composed of 3 respiratory subunits cytochrome b, cytochrome c1 and Rieske protein UQCRFS1, 2 core protein subunits UQCRC1/QCR1 and UQCRC2/QCR2, and 6 low-molecular weight protein subunits UQCRH/QCR6, UQCRB/QCR7, UQCRQ/QCR8, UQCR10/QCR9, UQCR11/QCR10 and subunit 9, the cleavage product of Rieske protein UQCRFS1. The complex exists as an obligatory dimer and forms supercomplexes (SCs) in the inner mitochondrial membrane with NADH-ubiquinone oxidoreductase (complex I, CI) and cytochrome c oxidase (complex IV, CIV), resulting in different assemblies (supercomplex SCI(1)III(2)IV(1) and megacomplex MCI(2)III(2)IV(2)). Interacts with UQCC6. Interacts with STMP1.

It is found in the mitochondrion inner membrane. In terms of biological role, component of the ubiquinol-cytochrome c oxidoreductase, a multisubunit transmembrane complex that is part of the mitochondrial electron transport chain which drives oxidative phosphorylation. The respiratory chain contains 3 multisubunit complexes succinate dehydrogenase (complex II, CII), ubiquinol-cytochrome c oxidoreductase (cytochrome b-c1 complex, complex III, CIII) and cytochrome c oxidase (complex IV, CIV), that cooperate to transfer electrons derived from NADH and succinate to molecular oxygen, creating an electrochemical gradient over the inner membrane that drives transmembrane transport and the ATP synthase. The cytochrome b-c1 complex catalyzes electron transfer from ubiquinol to cytochrome c, linking this redox reaction to translocation of protons across the mitochondrial inner membrane, with protons being carried across the membrane as hydrogens on the quinol. In the process called Q cycle, 2 protons are consumed from the matrix, 4 protons are released into the intermembrane space and 2 electrons are passed to cytochrome c. The 2 core subunits UQCRC1/QCR1 and UQCRC2/QCR2 are homologous to the 2 mitochondrial-processing peptidase (MPP) subunits beta-MPP and alpha-MPP respectively, and they seem to have preserved their MPP processing properties. May be involved in the in situ processing of UQCRFS1 into the mature Rieske protein and its mitochondrial targeting sequence (MTS)/subunit 9 when incorporated into complex III. Seems to play an important role in the maintenance of proper mitochondrial function in nigral dopaminergic neurons. In Mesocricetus auratus (Golden hamster), this protein is Cytochrome b-c1 complex subunit 1, mitochondrial.